The following is a 927-amino-acid chain: Valine--tRNA ligase (927 aa).

Residues 45–55 carry the 'HIGH' region motif; sequence PNVTGSLHMGH. Positions 571–575 match the 'KMSKS' region motif; it reads KMSKS. Lysine 574 lines the ATP pocket. A coiled-coil region spans residues 856–917; that stretch reads SLIDLAAEAA…EYRDAQDKLA (62 aa).

This sequence belongs to the class-I aminoacyl-tRNA synthetase family. ValS type 1 subfamily. As to quaternary structure, monomer.

The protein resides in the cytoplasm. It catalyses the reaction tRNA(Val) + L-valine + ATP = L-valyl-tRNA(Val) + AMP + diphosphate. Catalyzes the attachment of valine to tRNA(Val). As ValRS can inadvertently accommodate and process structurally similar amino acids such as threonine, to avoid such errors, it has a 'posttransfer' editing activity that hydrolyzes mischarged Thr-tRNA(Val) in a tRNA-dependent manner. The sequence is that of Valine--tRNA ligase from Mesorhizobium japonicum (strain LMG 29417 / CECT 9101 / MAFF 303099) (Mesorhizobium loti (strain MAFF 303099)).